Reading from the N-terminus, the 672-residue chain is Amidase chyE (672 aa).

The active-site Nucleophile is the cysteine 2. The 218-residue stretch at 2 to 219 (CGISAFLCHP…PGHYLISRPN (218 aa)) folds into the Glutamine amidotransferase type-2 domain. An Asparagine synthetase domain is found at 250-639 (VRKRLLEAVK…TQEAVEKAFT (390 aa)).

It belongs to the asparagine synthetase family.

The protein operates within pigment biosynthesis. In terms of biological role, amidase; part of the gene cluster that mediates the biosynthesis of the yellow pigment chrysogine. the NRPS chyA mediates the condensation of anthranilic acid and alanine into the intermediate 2-(2-aminopropanamido)benzoic acid. The remainder of the pathway is highly branched yielding at least 13 chrysogine-related compounds. The malonyl transferase chyE converts 2-(2-aminopropanamido)benzoic acid and 2-(2-aminopropanamido)benzamidine into 2-(2-(2-carboxyacetamido)propanamido)benzoic acid and 3-((1-((2-carbamoylphenyl)amino)-1-oxopropan-2-yl)amino)-3-oxopropanoic acid, respectively. ChyD is an amidase, being responsible for the amidation of the carboxylic acid moiety of 2-(2-aminopropanamido)benzoic acid, 2-(2-(2-carboxyacetamido)propanamido)benzoic acid and 2-(2-((4-amino-1-carboxy-4-oxobutyl)amino)propanamido)benzoic acid. ChyC is involved in the same reactions as ChyD, but plays a more minor role in the amidation reactions compared to chyD. The oxidoreductases chyH and chyM are involved in oxidation reactions that form N-pyruvoylanthranilamide from 2-(2-aminopropanamido)benzamidine and (1-((2-carbamoylphenyl)amino)-1-oxopropan-2-yl)glutamine, respectively. N-pyruvoylanthranilamide is further converted via two further branches in the pathway, yielding chrysogine and additional chrysogine-related coumpounds. Chrysogine is likely formed by a spontaneous ring closure from N-pyruvoylanthranilamide. This Penicillium rubens (strain ATCC 28089 / DSM 1075 / NRRL 1951 / Wisconsin 54-1255) (Penicillium chrysogenum) protein is Amidase chyE.